The chain runs to 450 residues: Phosphoglucosamine mutase (450 aa).

The active-site Phosphoserine intermediate is Ser-103. 4 residues coordinate Mg(2+): Ser-103, Asp-243, Asp-245, and Asp-247. Ser-103 is modified (phosphoserine).

This sequence belongs to the phosphohexose mutase family. Mg(2+) serves as cofactor. Activated by phosphorylation.

It carries out the reaction alpha-D-glucosamine 1-phosphate = D-glucosamine 6-phosphate. Functionally, catalyzes the conversion of glucosamine-6-phosphate to glucosamine-1-phosphate. The protein is Phosphoglucosamine mutase of Lactobacillus delbrueckii subsp. bulgaricus (strain ATCC BAA-365 / Lb-18).